The primary structure comprises 101 residues: Pro-corazonin (101 aa).

A signal peptide spans 1-16; that stretch reads MLVLFVLSLVVSCALC. An Asparagine amide modification is found at N27. Positions 31 to 101 are excised as a propeptide; that stretch reads SNFPAEISAL…REKAPNNDNY (71 aa).

This sequence belongs to the corazonin family. As to expression, expressed in central brain and the retrocerebral complex but not in antennal lobes, optic lobes or in gnathal, thoracic and abdominal ganglia (at protein level).

Its subcellular location is the secreted. Functionally, cardioactive peptide. Corazonin is probably involved in the physiological regulation of the heart beat. In Camponotus floridanus (Florida carpenter ant), this protein is Pro-corazonin.